An 875-amino-acid chain; its full sequence is Lysine-specific demethylase 7A (875 aa).

The segment at 5-56 (PLYCVCRQPYDVNRFMIECDICKDWFHGSCVQVVEHHAADIDVYHCPNCEPI) adopts a PHD-type zinc-finger fold. The JmjC domain maps to 197–353 (FSDTRMSNLV…MQLRCYEMER (157 aa)). Residue threonine 246 participates in substrate binding. The Fe cation site is built by histidine 249 and aspartate 251. Substrate is bound at residue lysine 266. Histidine 321 provides a ligand contact to Fe cation. 3 disordered regions span residues 442 to 506 (EDDS…SRKL), 629 to 710 (SQGE…NTDC), and 742 to 820 (QGNG…ATAK). The segment covering 448–462 (AVKTQGSAECSLSRS) has biased composition (polar residues). The segment covering 478 to 505 (QDHHHHRRRHHHHHHHHHHHHHHHHSRK) has biased composition (basic residues). Residues 650–663 (SDSKAGDSAEKCSL) show a composition bias toward basic and acidic residues. The segment covering 688 to 697 (SHRHSHHKQA) has biased composition (basic residues). Positions 742 to 762 (QGNGSSTSSSSDMWDSSEPCS) are enriched in low complexity.

Belongs to the JHDM1 histone demethylase family. JHDM1D subfamily. Fe(2+) is required as a cofactor. In terms of tissue distribution, predominantly expressed in brain.

Its subcellular location is the nucleus. Its function is as follows. Histone demethylase required for brain development. Specifically demethylates dimethylated 'Lys-9' and 'Lys-27' (H3K9me2 and H3K27me2, respectively) of histone H3 and monomethylated histone H4 'Lys-20' residue (H4K20Me1), thereby playing a central role in histone code. The protein is Lysine-specific demethylase 7A (kdm7a) of Danio rerio (Zebrafish).